A 166-amino-acid polypeptide reads, in one-letter code: Regulatory protein RecX (166 aa).

It belongs to the RecX family.

The protein resides in the cytoplasm. Its function is as follows. Modulates RecA activity. The sequence is that of Regulatory protein RecX from Salmonella arizonae (strain ATCC BAA-731 / CDC346-86 / RSK2980).